The chain runs to 671 residues: DNA ligase (671 aa).

NAD(+) is bound by residues 32–36 (DAEYD), 81–82 (SL), and E113. K115 acts as the N6-AMP-lysine intermediate in catalysis. Positions 136, 173, 290, and 314 each coordinate NAD(+). Zn(2+) contacts are provided by C408, C411, C426, and C432. A BRCT domain is found at 593–671 (EIDSPFAGKT…EAEMLRLLGS (79 aa)).

Belongs to the NAD-dependent DNA ligase family. LigA subfamily. Mg(2+) is required as a cofactor. It depends on Mn(2+) as a cofactor.

It catalyses the reaction NAD(+) + (deoxyribonucleotide)n-3'-hydroxyl + 5'-phospho-(deoxyribonucleotide)m = (deoxyribonucleotide)n+m + AMP + beta-nicotinamide D-nucleotide.. Functionally, DNA ligase that catalyzes the formation of phosphodiester linkages between 5'-phosphoryl and 3'-hydroxyl groups in double-stranded DNA using NAD as a coenzyme and as the energy source for the reaction. It is essential for DNA replication and repair of damaged DNA. The polypeptide is DNA ligase (Escherichia coli O7:K1 (strain IAI39 / ExPEC)).